The chain runs to 184 residues: Lysozyme 1 (184 aa).

A signal peptide spans 1 to 20 (MNGLILFCAVVFATAVCTYG). Residues 69 to 184 (TGMVSQQCLR…WRRVQAQGCN (116 aa)) enclose the I-type lysozyme domain. 6 disulfides stabilise this stretch: Cys76–Cys152, Cys81–Cys87, Cys92–Cys101, Cys114–Cys134, Cys124–Cys130, and Cys148–Cys166. The active-site Proton donor is the Glu84. Asp95 functions as the Nucleophile in the catalytic mechanism. 107 to 113 (KRAYWID) provides a ligand contact to substrate. Substrate is bound by residues Tyr138 and 159 to 161 (HNG).

In terms of tissue distribution, hemolymph, labial palps, non-vesiculated cells of mantle connective tissue, cells of interlamellar junctions and epithelia surrounding the water tubes of the gills.

The protein localises to the secreted. The catalysed reaction is Hydrolysis of (1-&gt;4)-beta-linkages between N-acetylmuramic acid and N-acetyl-D-glucosamine residues in a peptidoglycan and between N-acetyl-D-glucosamine residues in chitodextrins.. Has antibacterial activity against the Gram-positive bacteria L.garvieae, M.luteus and Enterococcus sp., and the Gram-negative bacteria E.coli and V.vulnificus. Weak antibacterial activity against the Gram-negative bacterium A.hydrophila. No antibacterial activity detected against the Gram-positive bacterium S.iniae or against the Gram-negative bacterium E.ictaluri. Shows some chitinase activity but no isopeptidase activity. This chain is Lysozyme 1, found in Crassostrea virginica (Eastern oyster).